A 355-amino-acid chain; its full sequence is tRNA uridine(34) hydroxylase (355 aa).

Residues 146–240 form the Rhodanese domain; sequence DDPDTVFVDM…YARQAKAQGL (95 aa). Cys-200 acts as the Cysteine persulfide intermediate in catalysis.

The protein belongs to the TrhO family.

The catalysed reaction is uridine(34) in tRNA + AH2 + O2 = 5-hydroxyuridine(34) in tRNA + A + H2O. Its function is as follows. Catalyzes oxygen-dependent 5-hydroxyuridine (ho5U) modification at position 34 in tRNAs. In Pectobacterium atrosepticum (strain SCRI 1043 / ATCC BAA-672) (Erwinia carotovora subsp. atroseptica), this protein is tRNA uridine(34) hydroxylase.